A 557-amino-acid polypeptide reads, in one-letter code: T-complex protein 1 subunit theta-like 2 (557 aa).

Disordered stretches follow at residues 1-33 (MDSTVPSALELPQRLALNPRESPRSPEEEEPHL) and 531-557 (EIWNPDSKKTKKHPPPVETKKILGLNN).

It belongs to the TCP-1 chaperonin family.

It localises to the cytoplasm. Its function is as follows. Possible molecular chaperone; assists the folding of proteins upon ATP hydrolysis. The chain is T-complex protein 1 subunit theta-like 2 (CCT8L2) from Homo sapiens (Human).